Consider the following 127-residue polypeptide: Large ribosomal subunit protein bL17 (127 aa).

This sequence belongs to the bacterial ribosomal protein bL17 family. As to quaternary structure, part of the 50S ribosomal subunit. Contacts protein L32.

This chain is Large ribosomal subunit protein bL17, found in Limosilactobacillus reuteri (strain DSM 20016) (Lactobacillus reuteri).